Here is a 302-residue protein sequence, read N- to C-terminus: MPASGAGYAGGSIVPDGRTLVNCRDLHKARDAYQLRDIEATRAAHSLDLYRELTGDHKENHTNTSSDYVKAVVFGGLDGIVTIFAIVAGCVGADLSCSQVLMVGLGNLLADAISMGFGEYVSAAAEKDFVEAEKQREEWEVENCPEEEKREMVEIYTEKYGFSRADAQSMVDITFKYKKFFVQHMMVEELGLMYGFDEPTPIKRGLVMFTAFCFFGLLPLAGFIGWVAAFGLGAEADMAFLMACVVSIMTLFILGFSKGKFVGQNPTKSACLMAMNGGCAGTVAYGVGSLLQLVVGANLTAA.

At 1 to 70 the chain is on the cytoplasmic side; that stretch reads MPASGAGYAG…HTNTSSDYVK (70 aa). The helical transmembrane segment at 71-91 threads the bilayer; that stretch reads AVVFGGLDGIVTIFAIVAGCV. At 92-99 the chain is on the vacuolar side; the sequence is GADLSCSQ. A helical membrane pass occupies residues 100-120; it reads VLMVGLGNLLADAISMGFGEY. The Cytoplasmic segment spans residues 121 to 211; that stretch reads VSAAAEKDFV…IKRGLVMFTA (91 aa). Fe cation-binding residues include E137, E140, E148, E151, M185, and E189. The helical transmembrane segment at 212-232 threads the bilayer; sequence FCFFGLLPLAGFIGWVAAFGL. At 233–235 the chain is on the vacuolar side; the sequence is GAE. The helical transmembrane segment at 236 to 256 threads the bilayer; it reads ADMAFLMACVVSIMTLFILGF. The Cytoplasmic portion of the chain corresponds to 257-276; the sequence is SKGKFVGQNPTKSACLMAMN. Residues 277 to 297 traverse the membrane as a helical segment; it reads GGCAGTVAYGVGSLLQLVVGA. Over 298–302 the chain is Vacuolar; the sequence is NLTAA.

The protein belongs to the CCC1 family.

The protein localises to the vacuole membrane. It carries out the reaction Fe(2+)(in) = Fe(2+)(out). Functionally, vacuolar iron transporter involved in the transfer of iron ions from the cytosol to the vacuole for intracellular iron storage. Plays an essential role in detoxification of excess iron. Important for parasite survival within macrophages and parasite virulence in vivo. The sequence is that of Vacuolar iron transporter from Toxoplasma gondii (strain ATCC 50861 / VEG).